The primary structure comprises 497 residues: Putative glucuronosyltransferase PGSIP8 (497 aa).

The chain crosses the membrane as a helical span at residues 3-23; it reads LQRGFVFLSLVLSFMIIETTA. Positions 165 and 167 each coordinate Mn(2+). 5 helical membrane-spanning segments follow: residues 319–339, 365–385, 388–408, 418–438, and 442–462; these read YSAE…IIVV, GFKL…FFTI, TIHP…LSSI, LPVL…AFPW, and GVVR…FVWV.

It belongs to the glycosyltransferase 8 family. Glycogenin subfamily. Mn(2+) serves as cofactor.

It localises to the membrane. The protein is Putative glucuronosyltransferase PGSIP8 (PGSIP8) of Arabidopsis thaliana (Mouse-ear cress).